The chain runs to 202 residues: uncharacterized protein (202 aa).

Residues 116-196 (LDLHGMTCSE…GKGTTWVLLK (81 aa)) enclose the Smr domain.

This is an uncharacterized protein from Treponema pallidum (strain Nichols).